The sequence spans 807 residues: uncharacterized protein (807 aa).

One can recognise a Reverse transcriptase domain in the interval 281 to 566 (IIQSLKSEEF…DKILFLGTNI (286 aa)).

Its subcellular location is the mitochondrion. This is an uncharacterized protein from Schizosaccharomyces pombe (strain 972 / ATCC 24843) (Fission yeast).